Reading from the N-terminus, the 798-residue chain is Phenylalanine--tRNA ligase beta subunit (798 aa).

Residues 39 to 148 form the tRNA-binding domain; the sequence is SKHLGGFVVG…VTLAVGASLL (110 aa). A B5 domain is found at 401–476; the sequence is DWQKSIVLRP…RINGYDNIPA (76 aa). Positions 454, 460, 463, and 464 each coordinate Mg(2+). Residues 704–797 form the FDX-ACB domain; it reads SALQPLDRDF…VAKATGGELR (94 aa).

It belongs to the phenylalanyl-tRNA synthetase beta subunit family. Type 1 subfamily. As to quaternary structure, tetramer of two alpha and two beta subunits. It depends on Mg(2+) as a cofactor.

It is found in the cytoplasm. It catalyses the reaction tRNA(Phe) + L-phenylalanine + ATP = L-phenylalanyl-tRNA(Phe) + AMP + diphosphate + H(+). The polypeptide is Phenylalanine--tRNA ligase beta subunit (Paramagnetospirillum magneticum (strain ATCC 700264 / AMB-1) (Magnetospirillum magneticum)).